The primary structure comprises 411 residues: Multidrug resistance protein MdtA (411 aa).

The first 26 residues, 1 to 26 (MNNNKKTKKRFSLIIILLIVIAGAIA), serve as a signal peptide directing secretion. The span at 35-55 (SAPPVSKDTPTANTPNRSTAG) shows a compositional bias: polar residues. Residues 35-64 (SAPPVSKDTPTANTPNRSTAGSRRPPMPPV) form a disordered region.

Belongs to the membrane fusion protein (MFP) (TC 8.A.1) family. In terms of assembly, part of a tripartite efflux system composed of MdtA, MdtB and MdtC.

It localises to the cell inner membrane. In Proteus mirabilis (strain HI4320), this protein is Multidrug resistance protein MdtA.